The chain runs to 377 residues: MKSVGLITEYNPFHNGHLFHATLSKQRSETNVTIAIMSGNFVMRGEPAIYHKFKRTEMALSAVDLVVELPLIGSLSSSDTFAEIAIKTAQYLDIDIISFGSESASLKDLQYLATQMIDYEKHPDFKEKLKQGKSYPRILSELTHNDTLLQSPNNILGISYLKAMQQFAPHMSALTIKREGSLHHQKVIDHHHFASGTSIRRSLMNDNVDWKNVVPNQIQSLYCKPHTTVEDTFPFIKHQLITQPKESLHSIYTINEGFENRLQTMIHRSDSFESLLSNLKTKRYTQTYIQRVLMNVLLNITKDDVNKEINAVRVLGMSEKGRSYLKYLKANYPNRHYITNVNQKTAHYFKNEIKATHVYNLLSNQSQTDFNTPLVRI.

Residues 7–20, Gly100, Asn153, and Arg178 contribute to the ATP site; that span reads ITEYNPFHNGHLFH.

It belongs to the TmcAL family.

It localises to the cytoplasm. It carries out the reaction cytidine(34) in elongator tRNA(Met) + acetate + ATP = N(4)-acetylcytidine(34) in elongator tRNA(Met) + AMP + diphosphate. Catalyzes the formation of N(4)-acetylcytidine (ac(4)C) at the wobble position of elongator tRNA(Met), using acetate and ATP as substrates. First activates an acetate ion to form acetyladenylate (Ac-AMP) and then transfers the acetyl group to tRNA to form ac(4)C34. This is tRNA(Met) cytidine acetate ligase from Staphylococcus epidermidis (strain ATCC 12228 / FDA PCI 1200).